A 539-amino-acid polypeptide reads, in one-letter code: Chaperonin GroEL 1 (539 aa).

Residues threonine 30–proline 33, lysine 51, aspartate 87–threonine 91, glycine 415, asparagine 480–alanine 482, and aspartate 496 contribute to the ATP site.

Belongs to the chaperonin (HSP60) family. In terms of assembly, forms a cylinder of 14 subunits composed of two heptameric rings stacked back-to-back. Interacts with the co-chaperonin GroES.

The protein resides in the cytoplasm. It carries out the reaction ATP + H2O + a folded polypeptide = ADP + phosphate + an unfolded polypeptide.. Together with its co-chaperonin GroES, plays an essential role in assisting protein folding. The GroEL-GroES system forms a nano-cage that allows encapsulation of the non-native substrate proteins and provides a physical environment optimized to promote and accelerate protein folding. The chain is Chaperonin GroEL 1 from Erythrobacter litoralis (strain HTCC2594).